The sequence spans 87 residues: Pyocin-S2 immunity protein (87 aa).

It belongs to the colicins ColE2/ColE8/ColE9 and pyocins S1/S2 family.

The chain is Pyocin-S2 immunity protein (imm2) from Pseudomonas aeruginosa (strain ATCC 15692 / DSM 22644 / CIP 104116 / JCM 14847 / LMG 12228 / 1C / PRS 101 / PAO1).